Consider the following 480-residue polypeptide: Heparin cofactor 2 (480 aa).

The signal sequence occupies residues 1 to 19 (MQHRPHLLLISLTIMSVCG). Asparagine 32 carries an N-linked (GlcNAc...) asparagine glycan. 2 repeat units span residues 56–66 (GEEDDDYLDLE) and 70–80 (SEDDDYIDIID). The segment at 56–80 (GEEDDDYLDLEKLLSEDDDYIDIID) is 2 X 11 AA approximate repeats, Asp/Glu-rich (acidic) (hirudin-like). A sulfotyrosine mark is found at tyrosine 62 and tyrosine 75. Residue asparagine 169 is glycosylated (N-linked (GlcNAc...) asparagine). The glycosaminoglycan-binding site stretch occupies residues 173 to 193 (KYEILTIHNLFRKLTHRLFRR). 2 N-linked (GlcNAc...) asparagine glycosylation sites follow: asparagine 368 and asparagine 404.

It belongs to the serpin family. In terms of processing, N-glycosylated; different glycan composition appears to lead to two forms of this protein (56 and 60 kDa).

Its function is as follows. Thrombin inhibitor activated by the glycosaminoglycans, heparin or dermatan sulfate. In the presence of the latter, HC-II becomes the predominant thrombin inhibitor in place of antithrombin III (AT). The polypeptide is Heparin cofactor 2 (SERPIND1) (Oryctolagus cuniculus (Rabbit)).